Here is a 399-residue protein sequence, read N- to C-terminus: Argininosuccinate synthase (399 aa).

12–20 contributes to the ATP binding site; that stretch reads AFSGGLDTS. Tyrosine 90 serves as a coordination point for L-citrulline. Glycine 120 serves as a coordination point for ATP. L-aspartate is bound by residues threonine 122, asparagine 126, and aspartate 127. An L-citrulline-binding site is contributed by asparagine 126. L-citrulline-binding residues include arginine 130, serine 175, glutamate 260, and tyrosine 272.

This sequence belongs to the argininosuccinate synthase family. Type 1 subfamily. In terms of assembly, homotetramer.

The protein localises to the cytoplasm. It carries out the reaction L-citrulline + L-aspartate + ATP = 2-(N(omega)-L-arginino)succinate + AMP + diphosphate + H(+). The protein operates within amino-acid biosynthesis; L-arginine biosynthesis; L-arginine from L-ornithine and carbamoyl phosphate: step 2/3. The chain is Argininosuccinate synthase from Methanothermobacter thermautotrophicus (strain ATCC 29096 / DSM 1053 / JCM 10044 / NBRC 100330 / Delta H) (Methanobacterium thermoautotrophicum).